A 278-amino-acid chain; its full sequence is NH(3)-dependent NAD(+) synthetase (278 aa).

An ATP-binding site is contributed by 39–46; that stretch reads GVSGGVDS. A Mg(2+)-binding site is contributed by aspartate 45. Arginine 121 is a binding site for deamido-NAD(+). Threonine 141 contacts ATP. A Mg(2+)-binding site is contributed by glutamate 146. The deamido-NAD(+) site is built by lysine 154 and aspartate 161. Residues lysine 170 and serine 192 each coordinate ATP. 252–253 serves as a coordination point for deamido-NAD(+); sequence HK.

This sequence belongs to the NAD synthetase family. As to quaternary structure, homodimer.

It catalyses the reaction deamido-NAD(+) + NH4(+) + ATP = AMP + diphosphate + NAD(+) + H(+). Its pathway is cofactor biosynthesis; NAD(+) biosynthesis; NAD(+) from deamido-NAD(+) (ammonia route): step 1/1. In terms of biological role, catalyzes the ATP-dependent amidation of deamido-NAD to form NAD. Uses ammonia as a nitrogen source. This is NH(3)-dependent NAD(+) synthetase from Saccharolobus solfataricus (strain ATCC 35092 / DSM 1617 / JCM 11322 / P2) (Sulfolobus solfataricus).